We begin with the raw amino-acid sequence, 559 residues long: Cocaine esterase (559 aa).

The first 26 residues, 1 to 26 (MRLHRLRARLSAVACGLLLLLVRGQG), serve as a signal peptide directing secretion. At Gln-27 the chain carries Pyrrolidone carboxylic acid. Cys-95 and Cys-123 are disulfide-bonded. Asn-111 carries an N-linked (GlcNAc...) asparagine glycan. The active-site Acyl-ester intermediate is the Ser-228. The N-linked (GlcNAc...) asparagine glycan is linked to Asn-276. Cys-280 and Cys-291 are oxidised to a cystine. Active-site charge relay system residues include Glu-345 and His-457. The short motif at 556–559 (HTEL) is the Prevents secretion from ER element.

It belongs to the type-B carboxylesterase/lipase family. As to quaternary structure, monomer. Post-translationally, glycosylated. In terms of tissue distribution, preferentially expressed in intestine with moderate expression in liver. Within the intestine, highest expression is found in small intestine with lower expression in colon and rectum.

The protein localises to the endoplasmic reticulum lumen. The catalysed reaction is cocaine + H2O = ecgonine methyl ester + benzoate + H(+). The enzyme catalyses a carboxylic ester + H2O = an alcohol + a carboxylate + H(+). It catalyses the reaction 4-methylumbelliferyl acetate + H2O = 4-methylumbelliferone + acetate + H(+). It carries out the reaction 2-(5Z,8Z,11Z,14Z-eicosatetraenoyl)-glycerol + H2O = glycerol + (5Z,8Z,11Z,14Z)-eicosatetraenoate + H(+). The catalysed reaction is prostaglandin E2 1-glyceryl ester + H2O = prostaglandin E2 + glycerol + H(+). The enzyme catalyses prostaglandin F2alpha 1-glyceryl ester + H2O = prostaglandin F2alpha + glycerol + H(+). Functionally, involved in the detoxification of xenobiotics and in the activation of ester and amide prodrugs. Shows high catalytic efficiency for hydrolysis of cocaine, 4-methylumbelliferyl acetate, heroin and 6-monoacetylmorphine. Hydrolyzes aspirin, substrates with large alcohol group and small acyl group and endogenous lipids such as triacylglycerol. Converts monoacylglycerides to free fatty acids and glycerol. Hydrolyzes of 2-arachidonoylglycerol and prostaglandins. The polypeptide is Cocaine esterase (Homo sapiens (Human)).